A 453-amino-acid polypeptide reads, in one-letter code: C4-dicarboxylate TRAP transporter large permease protein DctM (453 aa).

The next 13 helical transmembrane spans lie at 2 to 22, 50 to 70, 82 to 102, 104 to 124, 139 to 159, 172 to 192, 217 to 237, 243 to 263, 289 to 309, 326 to 346, 356 to 376, 380 to 400, and 417 to 437; these read AVAL…PIAI, AFAG…STFM, FAIA…VVAC, MFAA…SIVI, GVIC…VMVV, FLGG…AIYI, ASWG…GIFT, AVAA…MGPF, LYDA…ALIL, MLSA…ILLV, LLVI…IDPI, IMMV…LNLF, and ALPW…VPWV.

Belongs to the TRAP transporter large permease family. As to quaternary structure, the complex comprises the extracytoplasmic solute receptor protein DctP, and the two transmembrane proteins DctQ and DctM.

It localises to the cell inner membrane. Part of the tripartite ATP-independent periplasmic (TRAP) transport system DctPQM involved in C4-dicarboxylates uptake. This chain is C4-dicarboxylate TRAP transporter large permease protein DctM, found in Vibrio cholerae serotype O1 (strain ATCC 39315 / El Tor Inaba N16961).